The sequence spans 1077 residues: Ubiquitin carboxyl-terminal hydrolase 28 (1077 aa).

The segment at aspartate 60 to glycine 80 is disordered. Position 67 is a phosphoserine (serine 67). The UIM domain maps to aspartate 97–isoleucine 116. A Glycyl lysine isopeptide (Lys-Gly) (interchain with G-Cter in SUMO2) cross-link involves residue lysine 99. The USP domain occupies valine 162 to aspartate 650. Catalysis depends on cysteine 171, which acts as the Nucleophile. The residue at position 375 (serine 375) is a Phosphoserine. The disordered stretch occupies residues histidine 477 to aspartate 535. Positions serine 481 to threonine 501 are enriched in low complexity. Positions proline 514 to methionine 524 are enriched in polar residues. Phosphoserine is present on serine 550. The active-site Proton acceptor is histidine 600. The tract at residues glutamate 697 to serine 728 is disordered. The segment covering glutamate 707 to serine 724 has biased composition (low complexity). Serine 714 is subject to Phosphoserine. Residue lysine 759 forms a Glycyl lysine isopeptide (Lys-Gly) (interchain with G-Cter in SUMO2) linkage. Residue threonine 1048 is modified to Phosphothreonine.

This sequence belongs to the peptidase C19 family. USP28 subfamily. Interacts with ZNF304. Interacts with PRKD1. Interacts with TP53BP1. Interacts with isoform 1 of FBXW7; following DNA damage, dissociates from FBXW7 leading to degradation of MYC. In terms of processing, degraded upon nickel ion level or hypoxia exposure. Post-translationally, phosphorylated upon DNA damage at Ser-67 and Ser-714, by ATM or ATR. Phosphorylated by PRKD1.

It localises to the nucleus. The protein resides in the nucleoplasm. The catalysed reaction is Thiol-dependent hydrolysis of ester, thioester, amide, peptide and isopeptide bonds formed by the C-terminal Gly of ubiquitin (a 76-residue protein attached to proteins as an intracellular targeting signal).. In terms of biological role, deubiquitinase involved in DNA damage response checkpoint and MYC proto-oncogene stability. Involved in DNA damage induced apoptosis by specifically deubiquitinating proteins of the DNA damage pathway such as CLSPN. Also involved in G2 DNA damage checkpoint, by deubiquitinating CLSPN, and preventing its degradation by the anaphase promoting complex/cyclosome (APC/C). In contrast, it does not deubiquitinate PLK1. Specifically deubiquitinates MYC in the nucleoplasm, leading to prevent MYC degradation by the proteasome: acts by specifically interacting with isoform 1 of FBXW7 (FBW7alpha) in the nucleoplasm and counteracting ubiquitination of MYC by the SCF(FBW7) complex. In contrast, it does not interact with isoform 4 of FBXW7 (FBW7gamma) in the nucleolus, allowing MYC degradation and explaining the selective MYC degradation in the nucleolus. Deubiquitinates ZNF304, hence preventing ZNF304 degradation by the proteasome and leading to the activated KRAS-mediated promoter hypermethylation and transcriptional silencing of tumor suppressor genes (TSGs) in a subset of colorectal cancers (CRC) cells. The chain is Ubiquitin carboxyl-terminal hydrolase 28 (USP28) from Homo sapiens (Human).